Consider the following 609-residue polypeptide: Kelch domain-containing protein 10 homolog (609 aa).

Positions 103–146 (ASDLDEEEEEEDDDVDVDVDYGDTDSESEFEEMYSDEWTSSSDE) are disordered. The segment covering 104 to 137 (SDLDEEEEEEDDDVDVDVDYGDTDSESEFEEMYS) has biased composition (acidic residues). 6 Kelch repeats span residues 214–277 (HLYS…IHNN), 279–334 (LISH…IHKH), 335–381 (FLYT…RYRH), 389–437 (HIFV…GNRG), 458–508 (EAFI…HSDN), and 510–554 (CMYV…YNDN). A disordered region spans residues 576-609 (LPPQRRRRLDTSQPDPSMLISLYSNPKRARSSTQ).

Interacts with Elongin-C; may be the substrate recognition component of an E3 ubiquitin ligase complex.

Activates the Pk92B/DASK1-MAPK signaling cascade. The sequence is that of Kelch domain-containing protein 10 homolog (slim) from Drosophila melanogaster (Fruit fly).